A 310-amino-acid chain; its full sequence is Ribosomal RNA small subunit methyltransferase H (310 aa).

S-adenosyl-L-methionine contacts are provided by residues 32–34, aspartate 52, phenylalanine 79, aspartate 100, and glutamine 107; that span reads GGH.

The protein belongs to the methyltransferase superfamily. RsmH family.

It localises to the cytoplasm. It carries out the reaction cytidine(1402) in 16S rRNA + S-adenosyl-L-methionine = N(4)-methylcytidine(1402) in 16S rRNA + S-adenosyl-L-homocysteine + H(+). Functionally, specifically methylates the N4 position of cytidine in position 1402 (C1402) of 16S rRNA. This is Ribosomal RNA small subunit methyltransferase H from Geobacillus kaustophilus (strain HTA426).